Consider the following 396-residue polypeptide: Elongation factor Tu (396 aa).

The tr-type G domain occupies 10–206 (KAHVNIGTIG…AVDEYIPDPV (197 aa)). The G1 stretch occupies residues 19 to 26 (GHVDHGKT). Residue 19–26 (GHVDHGKT) participates in GTP binding. Residue Thr-26 coordinates Mg(2+). Positions 62–66 (GITIN) are G2. A G3 region spans residues 83 to 86 (DAPG). Residues 83-87 (DAPGH) and 138-141 (NKSD) each bind GTP. The segment at 138–141 (NKSD) is G4. Residues 176–178 (SAL) form a G5 region.

This sequence belongs to the TRAFAC class translation factor GTPase superfamily. Classic translation factor GTPase family. EF-Tu/EF-1A subfamily. As to quaternary structure, monomer.

It localises to the cytoplasm. It carries out the reaction GTP + H2O = GDP + phosphate + H(+). In terms of biological role, GTP hydrolase that promotes the GTP-dependent binding of aminoacyl-tRNA to the A-site of ribosomes during protein biosynthesis. This is Elongation factor Tu from Micrococcus luteus (Micrococcus lysodeikticus).